Here is a 255-residue protein sequence, read N- to C-terminus: 5'-nucleotidase SurE (255 aa).

A divalent metal cation contacts are provided by Asp-8, Asp-9, Ser-40, and Asn-93.

The protein belongs to the SurE nucleotidase family. The cofactor is a divalent metal cation.

It localises to the cytoplasm. The catalysed reaction is a ribonucleoside 5'-phosphate + H2O = a ribonucleoside + phosphate. Nucleotidase that shows phosphatase activity on nucleoside 5'-monophosphates. This Rhodopseudomonas palustris (strain BisA53) protein is 5'-nucleotidase SurE.